Here is a 461-residue protein sequence, read N- to C-terminus: Threonine/serine transporter ThrP (461 aa).

A run of 12 helical transmembrane segments spans residues 17 to 37 (IELI…AAST), 40 to 60 (WAGP…FFIM), 97 to 117 (WFMW…YVQF), 123 to 143 (AQWI…LAAV), 156 to 176 (IKVT…FFGF), 201 to 221 (GFLT…LIGI), 244 to 264 (ILIF…WNEI), 278 to 298 (IGIT…ALSG), 333 to 353 (VAGV…NYII), 360 to 380 (FVYV…VILI), 401 to 421 (IMFP…LIGM), and 430 to 450 (SLFV…VFGL).

The protein belongs to the amino acid-polyamine-organocation (APC) superfamily.

The protein resides in the cell inner membrane. The catalysed reaction is L-threonine(in) + H(+)(in) = L-threonine(out) + H(+)(out). It carries out the reaction L-serine(in) + H(+)(in) = L-serine(out) + H(+)(out). Its function is as follows. Permease that mediates the proton-dependent threonine and serine uptake. The protein is Threonine/serine transporter ThrP of Salmonella typhi.